The chain runs to 354 residues: N-acetyl-gamma-glutamyl-phosphate reductase (354 aa).

The active site involves Cys156.

Belongs to the NAGSA dehydrogenase family. Type 1 subfamily.

It is found in the cytoplasm. It carries out the reaction N-acetyl-L-glutamate 5-semialdehyde + phosphate + NADP(+) = N-acetyl-L-glutamyl 5-phosphate + NADPH + H(+). It functions in the pathway amino-acid biosynthesis; L-arginine biosynthesis; N(2)-acetyl-L-ornithine from L-glutamate: step 3/4. Its function is as follows. Catalyzes the NADPH-dependent reduction of N-acetyl-5-glutamyl phosphate to yield N-acetyl-L-glutamate 5-semialdehyde. In Bordetella pertussis (strain Tohama I / ATCC BAA-589 / NCTC 13251), this protein is N-acetyl-gamma-glutamyl-phosphate reductase.